The primary structure comprises 459 residues: DNA primase large subunit (459 aa).

4 residues coordinate [4Fe-4S] cluster: Cys-291, Cys-369, Cys-386, and Cys-428.

This sequence belongs to the eukaryotic-type primase large subunit family. As to quaternary structure, heterodimer of a catalytic subunit spp1/pri1 and a regulatory subunit spp2/pri2, also known as the DNA primase complex. Component of the alpha DNA polymerase complex (also known as the alpha DNA polymerase-primase complex) consisting of four subunits: the catalytic subunit pol1, the accessory subunit spb70/pol12, and the primase complex subunits spp1/pri1 and spp2/pri2 respectively. Interacts with orc2; preferentially associates with the unphosphorylated orc2 in G1 pre-Start prior to orc2 being phosphorylated by cdc2, the interaction is mediated by spb70 and might enable the association of the whole alpha DNA polymerase complex to orc2/spb70 complex on chromatin. The cofactor is [4Fe-4S] cluster.

Its subcellular location is the nucleus. The protein resides in the chromosome. Functionally, regulatory subunit of the DNA primase complex and component of the DNA polymerase alpha complex (also known as the alpha DNA polymerase-primase complex - primosome/replisome) which play an essential role in the initiation of DNA synthesis. During the S phase of the cell cycle, the DNA polymerase alpha complex (composed of a catalytic subunit pol1, an accessory subunit spb70/pol12 and two primase subunits, the catalytic subunit spp1/pri1 and the regulatory subunit spp2/pri2) is recruited to DNA at the replicative forks. The primase subunit of the polymerase alpha complex initiates DNA synthesis by oligomerising short RNA primers on both leading and lagging strands. The chain is DNA primase large subunit from Schizosaccharomyces pombe (strain 972 / ATCC 24843) (Fission yeast).